The sequence spans 399 residues: Imidazolonepropionase (399 aa).

Fe(3+) contacts are provided by His-68 and His-70. Positions 68 and 70 each coordinate Zn(2+). Arg-77, Tyr-140, and His-173 together coordinate 4-imidazolone-5-propanoate. Tyr-140 is a binding site for N-formimidoyl-L-glutamate. Residue His-238 coordinates Fe(3+). His-238 is a binding site for Zn(2+). 4-imidazolone-5-propanoate is bound at residue Gln-241. Asp-313 is a binding site for Fe(3+). A Zn(2+)-binding site is contributed by Asp-313. 2 residues coordinate N-formimidoyl-L-glutamate: Asn-315 and Gly-317. Thr-318 is a binding site for 4-imidazolone-5-propanoate.

The protein belongs to the metallo-dependent hydrolases superfamily. HutI family. It depends on Zn(2+) as a cofactor. Fe(3+) serves as cofactor.

The protein localises to the cytoplasm. It carries out the reaction 4-imidazolone-5-propanoate + H2O = N-formimidoyl-L-glutamate. It participates in amino-acid degradation; L-histidine degradation into L-glutamate; N-formimidoyl-L-glutamate from L-histidine: step 3/3. Its function is as follows. Catalyzes the hydrolytic cleavage of the carbon-nitrogen bond in imidazolone-5-propanoate to yield N-formimidoyl-L-glutamate. It is the third step in the universal histidine degradation pathway. This chain is Imidazolonepropionase, found in Rhizorhabdus wittichii (strain DSM 6014 / CCUG 31198 / JCM 15750 / NBRC 105917 / EY 4224 / RW1) (Sphingomonas wittichii).